We begin with the raw amino-acid sequence, 583 residues long: MDLMNGQASSVNIAATASEKSSSSESLSDKGSELKKSFDAVVFDVLKVTPEEYAGQITLMDVPVFKAIQPDELSSCGWNKKEKYSSAPNAVAFTRRFNHVSFWVVREILHAQTLKIRAEVLSHYIKTAKKLYELNNLHALMAVVSGLQSAPIFRLTKTWALLSRKDKTTFEKLEYVMSKEDNYKRLRDYISSLKMTPCIPYLGIYLSDLTYIDSAYPSTGSILENEQRSNLMNNILRIISDLQQSCEYDIPMLPHVQKYLNSVQYIEELQKFVEDDNYKLSLKIEPGTSTPRSAASREDLVGPEVGASPQSGRKSVAAEGALLPQTPPSPRNLIPHGHRKCHSLGYNFIHKMNTAEFKSATFPNAGPRHLLDDSVMEPHAPSRGQAESSTLSSGISIGSSDGSELSEETSWPAFERNRLYHSLGPVTRVARNGYRSHMKASSSAESEDLAVHLYPGAVTIQGVLRRKTLLKEGKKPTVASWTKYWAALCGTQLFYYAAKSLKATERKHFKSTSNKNVSVIGWMVMMADDPEHPDLFLLTDSEKGNSYKFQAGNRMNAMLWFKHLSAACQSNKQQVPTNLMTFE.

Residues 49–287 (TPEEYAGQIT…YKLSLKIEPG (239 aa)) enclose the Ras-GEF domain. A disordered region spans residues 283-314 (KIEPGTSTPRSAASREDLVGPEVGASPQSGRK). Phosphoserine is present on residues S293, S296, S308, and S311. Residues 324–327 (PQTP) carry the PXXP motif. T326 carries the post-translational modification Phosphothreonine. A phosphoserine mark is found at S329 and S343. T361 bears the Phosphothreonine mark. Residues 372–406 (DDSVMEPHAPSRGQAESSTLSSGISIGSSDGSELS) form a disordered region. A Phosphoserine modification is found at S374. A compositionally biased stretch (low complexity) spans 387 to 403 (ESSTLSSGISIGSSDGS). Residue S422 is modified to Phosphoserine. Residues 457–569 (AVTIQGVLRR…WFKHLSAACQ (113 aa)) enclose the PH domain. The segment at 459-583 (TIQGVLRRKT…QVPTNLMTFE (125 aa)) is required for stimulation of nucleotide exchange by RALA.

As to quaternary structure, interacts with the SH3 domains of GRB2 and PLCG1. Interacts with RALA.

The protein localises to the cytoplasm. It localises to the cell membrane. Guanine nucleotide exchange factor for the small GTPase RALA. May be involved in cytoskeletal organization. May also be involved in the stimulation of transcription in a Ras-independent fashion. This Homo sapiens (Human) protein is Ras-specific guanine nucleotide-releasing factor RalGPS2 (RALGPS2).